The following is a 35-amino-acid chain: Riboflavin-binding protein (35 aa).

Cys5 and Cys32 are oxidised to a cystine.

This sequence belongs to the folate receptor family.

In terms of biological role, required for the transport of riboflavin to the developing oocyte. This Struthio camelus (Common ostrich) protein is Riboflavin-binding protein.